The sequence spans 503 residues: Aspartyl/glutamyl-tRNA(Asn/Gln) amidotransferase subunit B (503 aa).

Belongs to the GatB/GatE family. GatB subfamily. In terms of assembly, heterotrimer of A, B and C subunits.

The enzyme catalyses L-glutamyl-tRNA(Gln) + L-glutamine + ATP + H2O = L-glutaminyl-tRNA(Gln) + L-glutamate + ADP + phosphate + H(+). The catalysed reaction is L-aspartyl-tRNA(Asn) + L-glutamine + ATP + H2O = L-asparaginyl-tRNA(Asn) + L-glutamate + ADP + phosphate + 2 H(+). Functionally, allows the formation of correctly charged Asn-tRNA(Asn) or Gln-tRNA(Gln) through the transamidation of misacylated Asp-tRNA(Asn) or Glu-tRNA(Gln) in organisms which lack either or both of asparaginyl-tRNA or glutaminyl-tRNA synthetases. The reaction takes place in the presence of glutamine and ATP through an activated phospho-Asp-tRNA(Asn) or phospho-Glu-tRNA(Gln). In Mycobacterium avium (strain 104), this protein is Aspartyl/glutamyl-tRNA(Asn/Gln) amidotransferase subunit B.